The primary structure comprises 395 residues: Pyridinium-3,5-bisthiocarboxylic acid mononucleotide nickel insertion protein (395 aa).

Belongs to the LarC family.

It carries out the reaction Ni(II)-pyridinium-3,5-bisthiocarboxylate mononucleotide = pyridinium-3,5-bisthiocarboxylate mononucleotide + Ni(2+). Its function is as follows. Involved in the biosynthesis of a nickel-pincer cofactor ((SCS)Ni(II) pincer complex). Binds Ni(2+), and functions in nickel delivery to pyridinium-3,5-bisthiocarboxylic acid mononucleotide (P2TMN), to form the mature cofactor. Is thus probably required for the activation of nickel-pincer cofactor-dependent enzymes. This Staphylococcus epidermidis (strain ATCC 12228 / FDA PCI 1200) protein is Pyridinium-3,5-bisthiocarboxylic acid mononucleotide nickel insertion protein.